We begin with the raw amino-acid sequence, 317 residues long: Melanocyte-stimulating hormone receptor (317 aa).

The Extracellular portion of the chain corresponds to 1–37; sequence MPVLGSQRRLLGSLNCTPPATFPLTLAPNRTGPQCLE. N-linked (GlcNAc...) asparagine glycosylation is present at N29. Residues 38-63 form a helical membrane-spanning segment; it reads VSIPDGLFLSLGLVSLVENVLVVAAI. Over 64–72 the chain is Cytoplasmic; that stretch reads AKNRNLHSP. The helical transmembrane segment at 73–93 threads the bilayer; that stretch reads MYYFICCLAVSDLLVSVSNVL. The Extracellular portion of the chain corresponds to 94–118; sequence ETAVMLLLEAGALAARAAVVQQLDN. Residues 119–140 form a helical membrane-spanning segment; sequence VIDMLICGSMVSSLCFLGAIAV. Over 141–163 the chain is Cytoplasmic; it reads DRYISIFYALRYHSVVTLPRAWR. The helical transmembrane segment at 164-183 threads the bilayer; the sequence is IIAAIWVASILTSLLFITYY. Residues 184–191 lie on the Extracellular side of the membrane; that stretch reads NHTVVLLC. Residues 192–211 traverse the membrane as a helical segment; it reads LVGFFIAMLALMAVLYVHML. Residues 212-240 are Cytoplasmic-facing; it reads ARACQHARGIARLQKRQRPIHQGFGLKGA. Residues 241–266 form a helical membrane-spanning segment; that stretch reads ATLTILLGVFFLCWGPFFLHLSLIVL. Topologically, residues 267–279 are extracellular; that stretch reads CPQHPTCGCIFKN. A helical transmembrane segment spans residues 280 to 300; that stretch reads FNLFLALIICNAIVDPLIYAF. The Cytoplasmic segment spans residues 301–317; the sequence is RSQELRKTLQEVLQCSW. C315 carries S-palmitoyl cysteine lipidation.

This sequence belongs to the G-protein coupled receptor 1 family. Interacts with MGRN1, but does not undergo MGRN1-mediated ubiquitination; this interaction competes with GNAS-binding and thus inhibits agonist-induced cAMP production. Interacts with OPN3; the interaction results in a decrease in MC1R-mediated cAMP signaling and ultimately a decrease in melanin production in melanocytes.

It localises to the cell membrane. Receptor for MSH (alpha, beta and gamma) and ACTH. The activity of this receptor is mediated by G proteins which activate adenylate cyclase. Mediates melanogenesis, the production of eumelanin (black/brown) and phaeomelanin (red/yellow), via regulation of cAMP signaling in melanocytes. The chain is Melanocyte-stimulating hormone receptor (MC1R) from Capreolus capreolus (European roe deer).